Here is a 325-residue protein sequence, read N- to C-terminus: MAWSLGSWLGGCLLVSALGMVPPPENVRMNSVNFKNILQWESPAFAKGNLTFTAQYLSYRIFQDKCMNTTLTECDFSSLSKYGDHTLRVRAEFADEHSDWVNITFCPVDDTIIGPPGMQVEVLADSLHMRFLAPKIENEYETWTMKNVYNSWTYNVQYWKNGTDEKFQITPQYDFEVLRNLEPWTTYCVQVRGFLPDRNKAGEWSEPVCEQTTHDETVPSWMVAVILMASVFMVCLALLGCFALLWCVYKKTKYAFSPRNSLPQHLKEFLGHPHHNTLLFFSFPLSDENDVFDKLSVIAEDSESGKQNPGDSCSLGTPPGQGPQS.

Residues 1–19 form the signal peptide; that stretch reads MAWSLGSWLGGCLLVSALG. At 20–220 the chain is on the extracellular side; that stretch reads MVPPPENVRM…QTTHDETVPS (201 aa). 2 consecutive Fibronectin type-III domains span residues 23–111 and 114–216; these read PPEN…VDDT and GPPG…THDE. N-linked (GlcNAc...) asparagine glycosylation is found at asparagine 49, asparagine 68, asparagine 102, and asparagine 161. Cysteine 66 and cysteine 74 are oxidised to a cystine. Cysteine 188 and cysteine 209 form a disulfide bridge. The chain crosses the membrane as a helical span at residues 221–242; the sequence is WMVAVILMASVFMVCLALLGCF. Over 243–325 the chain is Cytoplasmic; sequence ALLWCVYKKT…GTPPGQGPQS (83 aa). The disordered stretch occupies residues 301–325; that stretch reads DSESGKQNPGDSCSLGTPPGQGPQS. Residues 305–315 show a composition bias toward polar residues; sequence GKQNPGDSCSL.

This sequence belongs to the type II cytokine receptor family. As to quaternary structure, heterodimer with IFNLR1.

It is found in the membrane. Its function is as follows. Shared cell surface receptor required for the activation of five class 2 cytokines: IL10, IL22, IL26, IL28, and IFNL1. The IFNLR1/IL10RB dimer is a receptor for the cytokine ligands IFNL2 and IFNL3 and mediates their antiviral activity. The ligand/receptor complex stimulate the activation of the JAK/STAT signaling pathway leading to the expression of IFN-stimulated genes (ISG), which contribute to the antiviral state. This is Interleukin-10 receptor subunit beta (IL10RB) from Homo sapiens (Human).